Consider the following 462-residue polypeptide: MSMSSSNITSGFIDIATFDEIEKYMYGGPTATAYFVREIRKSTWFTQVPVPLSRNTGNAAFGQEWSVSISRAGDYLLQTWLRVNIPQVTLNAQLGPTFGLRWTRNFMHNLIREATITFNDLVAARFDNYHLDFWSAFTVPASKKIGYDNMIGNISALTNPVAPGGSLGSVGGINLNLPLPFFFSRDTGVALPTAALPYNEMQINFNFRDWPELLILTNTALVPPASPYVPIVVGTHLSAAPVLGAVQVWANYAIVSNEERRRMGCAIRDILIEQVQTAPRQNYTPLTNAMPTFDIRFSHAIKALFFSVRNKTSSAEWSNYATSSPVVTGQLVNYEPPGAFDPISNTTLIYENTNRLGAMGSDYFSLINPFYHAPTIPSSIGYHLYSYSLHFFDLDPMGSTNYGKLTNVSVVPQASPAAVTAAGGSGAAGSGADYAQSYEFVIIGVNNNIIRISGGALGFPVL.

This sequence belongs to the NCLDV major capsid protein family. In terms of assembly, homotrimer.

The protein resides in the virion. Functionally, major capsid protein that self assembles to form an icosahedral capsid. Represents around 50% of the total virion protein mass. The polypeptide is Major capsid protein (MCP) (Costelytra zealandica (CzIV)).